The primary structure comprises 1133 residues: Eukaryotic translation initiation factor 3 subunit A (1133 aa).

The 182-residue stretch at 317–498 folds into the PCI domain; that stretch reads IQRMTSHVLI…HCVHFGTDLS (182 aa). Coiled-coil stretches lie at residues 573-700 and 784-886; these read KKIE…YFER and EEER…EADS. A compositionally biased stretch (basic and acidic residues) spans 810–893; it reads KEEERRRAEE…ADSWRDRRGG (84 aa). Residues 810 to 1133 are disordered; sequence KEEERRRAEE…DGWTDVKHHR (324 aa). Positions 895-909 are enriched in low complexity; sequence APAAAAQPNPAAQEA. 3 stretches are compositionally biased toward basic and acidic residues: residues 920-944, 954-1081, and 1097-1117; these read GARE…RDVR, VERR…DSAW, and TRQD…KEAR.

It belongs to the eIF-3 subunit A family. In terms of assembly, component of the eukaryotic translation initiation factor 3 (eIF-3) complex.

The protein resides in the cytoplasm. Functionally, RNA-binding component of the eukaryotic translation initiation factor 3 (eIF-3) complex, which is involved in protein synthesis of a specialized repertoire of mRNAs and, together with other initiation factors, stimulates binding of mRNA and methionyl-tRNAi to the 40S ribosome. The eIF-3 complex specifically targets and initiates translation of a subset of mRNAs involved in cell proliferation. This is Eukaryotic translation initiation factor 3 subunit A from Aedes aegypti (Yellowfever mosquito).